The chain runs to 299 residues: Spermatocyte protein spe-11 (299 aa).

Residues 1-38 (MSDEEIDISTALNNKTTPKKKSLKRNSNSQEGYESPEE) are disordered.

As to expression, expressed in mature sperm.

It is found in the cytoplasm. It localises to the perinuclear region. Paternally sperm-supplied factor required for embryogenesis. Plays a role in preventing polyspermy possibly by promoting the formation of a continuous and cohesive eggshell chitin layer. The polypeptide is Spermatocyte protein spe-11 (spe-11) (Caenorhabditis elegans).